The following is a 72-amino-acid chain: UPF0270 protein KPK_0377 (72 aa).

The protein belongs to the UPF0270 family.

The polypeptide is UPF0270 protein KPK_0377 (Klebsiella pneumoniae (strain 342)).